A 164-amino-acid chain; its full sequence is Protein SprT (164 aa).

In terms of domain architecture, SprT-like spans 12–157 (CFLQAESFFK…CRRCRQTLVF (146 aa)). His-69 lines the Zn(2+) pocket. The active site involves Glu-70. Residue His-73 participates in Zn(2+) binding.

It belongs to the SprT family. Zn(2+) is required as a cofactor.

The protein localises to the cytoplasm. The chain is Protein SprT from Pseudomonas fluorescens (strain SBW25).